The primary structure comprises 222 residues: MVQVIESRFMSSASHLDNAPPPNASEIVFLGRSNVGKSTLINTLLNKPLAKSSSTPGKTQLINFFASVWVWHNQRLPLTFIDLPGFGYAKVSKTIKKEWERHLLNFLFMRQSIKLFLHLVDARHTDLAIDTSVATMLEQICRGDQCILRIYTKADKLNQSALNALYKRVYIQKNKVQGVDTDDTHTQSLLFSAISKNHRKMVSLTHLREEIVKYTLGLENGI.

Positions 23 to 217 constitute an EngB-type G domain; that stretch reads NASEIVFLGR…REEIVKYTLG (195 aa). GTP contacts are provided by residues 31–38, 57–61, 82–85, 152–155, and 191–193; these read GRSNVGKS, GKTQL, DLPG, TKAD, and FSA. Mg(2+) is bound by residues Ser-38 and Thr-59.

It belongs to the TRAFAC class TrmE-Era-EngA-EngB-Septin-like GTPase superfamily. EngB GTPase family. It depends on Mg(2+) as a cofactor.

Its function is as follows. Necessary for normal cell division and for the maintenance of normal septation. The polypeptide is Probable GTP-binding protein EngB (Helicobacter hepaticus (strain ATCC 51449 / 3B1)).